Reading from the N-terminus, the 336-residue chain is tRNA N6-adenosine threonylcarbamoyltransferase (336 aa).

His111 and His115 together coordinate Fe cation. Substrate-binding positions include 133-137 (LISGG), Asp166, Gly179, and Asn276. Asp301 lines the Fe cation pocket.

It belongs to the KAE1 / TsaD family. Fe(2+) is required as a cofactor.

The protein resides in the cytoplasm. It catalyses the reaction L-threonylcarbamoyladenylate + adenosine(37) in tRNA = N(6)-L-threonylcarbamoyladenosine(37) in tRNA + AMP + H(+). Its function is as follows. Required for the formation of a threonylcarbamoyl group on adenosine at position 37 (t(6)A37) in tRNAs that read codons beginning with adenine. Is involved in the transfer of the threonylcarbamoyl moiety of threonylcarbamoyl-AMP (TC-AMP) to the N6 group of A37, together with TsaE and TsaB. TsaD likely plays a direct catalytic role in this reaction. The polypeptide is tRNA N6-adenosine threonylcarbamoyltransferase (Wolbachia pipientis subsp. Culex pipiens (strain wPip)).